Consider the following 412-residue polypeptide: MKIYLVGGAVRDALLGLSVKDRDWVVVGSTPQEMLDAGYQQVGRDFPVFLHPQTHEEYALARTERKSGSGYTGFTCYAAPDVTLEDDLKRRDLTINALAQDDNGEIIDPYNGLGDLQNRLLRHVSPAFGEDPLRVLRVARFAARYAHLGFRIADETLTLMREMTHAGELEHLTPERVWKETESALTTRNPQVFFQVLRDCGALRVLFPEIDALFGVPAPARWHPEIDTGIHTLMTLSMAAMLSPQVDVRFATLCHDLGKGLTPPELWPRHHGHGPAGVKLVEQLCQRLRVPNEIRDLARLVAEFHDLIHTFPMLNPKTIVKLFDSIDAWRKPQRVEQLALTSEADVRGRTGFESADYPQGRWLREGWEVAQSVPTKAVVEAGFKGVEIREELTRRRIAAVASWKEQRCPKPD.

G8 and R11 together coordinate ATP. The CTP site is built by G8 and R11. Residues D21 and D23 each contribute to the Mg(2+) site. The ATP site is built by R91, R137, and R140. Residues R91, R137, and R140 each contribute to the CTP site. The 102-residue stretch at T228–W329 folds into the HD domain.

It belongs to the tRNA nucleotidyltransferase/poly(A) polymerase family. Bacterial CCA-adding enzyme type 1 subfamily. As to quaternary structure, monomer. Can also form homodimers and oligomers. Mg(2+) is required as a cofactor. Ni(2+) serves as cofactor.

The enzyme catalyses a tRNA precursor + 2 CTP + ATP = a tRNA with a 3' CCA end + 3 diphosphate. The catalysed reaction is a tRNA with a 3' CCA end + 2 CTP + ATP = a tRNA with a 3' CCACCA end + 3 diphosphate. In terms of biological role, catalyzes the addition and repair of the essential 3'-terminal CCA sequence in tRNAs without using a nucleic acid template. Adds these three nucleotides in the order of C, C, and A to the tRNA nucleotide-73, using CTP and ATP as substrates and producing inorganic pyrophosphate. tRNA 3'-terminal CCA addition is required both for tRNA processing and repair. Also involved in tRNA surveillance by mediating tandem CCA addition to generate a CCACCA at the 3' terminus of unstable tRNAs. While stable tRNAs receive only 3'-terminal CCA, unstable tRNAs are marked with CCACCA and rapidly degraded. The sequence is that of Multifunctional CCA protein from Shigella flexneri serotype 5b (strain 8401).